The primary structure comprises 505 residues: 2,3-bisphosphoglycerate-independent phosphoglycerate mutase (505 aa).

The Mn(2+) site is built by Asp-12 and Ser-62. Residue Ser-62 is the Phosphoserine intermediate of the active site. Residues His-123, 153 to 154 (RD), Arg-185, Arg-191, 257 to 260 (RPDR), and Lys-330 contribute to the substrate site. Mn(2+)-binding residues include Asp-397, His-401, Asp-438, His-439, and His-456.

This sequence belongs to the BPG-independent phosphoglycerate mutase family. In terms of assembly, monomer. Mn(2+) is required as a cofactor.

The catalysed reaction is (2R)-2-phosphoglycerate = (2R)-3-phosphoglycerate. Its pathway is carbohydrate degradation; glycolysis; pyruvate from D-glyceraldehyde 3-phosphate: step 3/5. Functionally, catalyzes the interconversion of 2-phosphoglycerate and 3-phosphoglycerate. The protein is 2,3-bisphosphoglycerate-independent phosphoglycerate mutase of Staphylococcus aureus (strain Mu50 / ATCC 700699).